Here is a 140-residue protein sequence, read N- to C-terminus: Large ribosomal subunit protein uL11 (140 aa).

Belongs to the universal ribosomal protein uL11 family. As to quaternary structure, part of the ribosomal stalk of the 50S ribosomal subunit. Interacts with L10 and the large rRNA to form the base of the stalk. L10 forms an elongated spine to which L12 dimers bind in a sequential fashion forming a multimeric L10(L12)X complex. In terms of processing, one or more lysine residues are methylated.

In terms of biological role, forms part of the ribosomal stalk which helps the ribosome interact with GTP-bound translation factors. This Dehalococcoides mccartyi (strain CBDB1) protein is Large ribosomal subunit protein uL11.